Consider the following 296-residue polypeptide: 4-diphosphocytidyl-2-C-methyl-D-erythritol kinase (296 aa).

Lys-18 is an active-site residue. ATP is bound at residue 102–112 (PMGGGIGGGSS). Asp-144 is a catalytic residue.

The protein belongs to the GHMP kinase family. IspE subfamily.

The enzyme catalyses 4-CDP-2-C-methyl-D-erythritol + ATP = 4-CDP-2-C-methyl-D-erythritol 2-phosphate + ADP + H(+). Its pathway is isoprenoid biosynthesis; isopentenyl diphosphate biosynthesis via DXP pathway; isopentenyl diphosphate from 1-deoxy-D-xylulose 5-phosphate: step 3/6. Catalyzes the phosphorylation of the position 2 hydroxy group of 4-diphosphocytidyl-2C-methyl-D-erythritol. This chain is 4-diphosphocytidyl-2-C-methyl-D-erythritol kinase, found in Vibrio atlanticus (strain LGP32) (Vibrio splendidus (strain Mel32)).